Reading from the N-terminus, the 130-residue chain is uncharacterized protein (130 aa).

This is an uncharacterized protein from Sputnik virophage.